Here is a 216-residue protein sequence, read N- to C-terminus: CDP-diacylglycerol--glycerol-3-phosphate 3-phosphatidyltransferase (216 aa).

4 consecutive transmembrane segments (helical) span residues Val-40–Gly-60, Val-88–Tyr-108, Met-141–Ala-161, and Val-176–Ile-196.

Belongs to the CDP-alcohol phosphatidyltransferase class-I family.

The protein localises to the cell membrane. The catalysed reaction is a CDP-1,2-diacyl-sn-glycerol + sn-glycerol 3-phosphate = a 1,2-diacyl-sn-glycero-3-phospho-(1'-sn-glycero-3'-phosphate) + CMP + H(+). The protein operates within phospholipid metabolism; phosphatidylglycerol biosynthesis; phosphatidylglycerol from CDP-diacylglycerol: step 1/2. Functionally, this protein catalyzes the committed step to the synthesis of the acidic phospholipids. The protein is CDP-diacylglycerol--glycerol-3-phosphate 3-phosphatidyltransferase (pgsA) of Treponema pallidum (strain Nichols).